We begin with the raw amino-acid sequence, 291 residues long: Release factor glutamine methyltransferase (291 aa).

Residues 127–131 (GTGSG), aspartate 150, tryptophan 179, and asparagine 196 each bind S-adenosyl-L-methionine. Position 196–199 (196–199 (NPPY)) interacts with substrate.

It belongs to the protein N5-glutamine methyltransferase family. PrmC subfamily.

It catalyses the reaction L-glutaminyl-[peptide chain release factor] + S-adenosyl-L-methionine = N(5)-methyl-L-glutaminyl-[peptide chain release factor] + S-adenosyl-L-homocysteine + H(+). Functionally, methylates the class 1 translation termination release factors RF1/PrfA and RF2/PrfB on the glutamine residue of the universally conserved GGQ motif. The sequence is that of Release factor glutamine methyltransferase from Thermosynechococcus vestitus (strain NIES-2133 / IAM M-273 / BP-1).